The sequence spans 410 residues: Phosphoglycerate kinase (410 aa).

Substrate contacts are provided by residues 22 to 24 (DIN), Arg-39, 62 to 65 (HQSR), Arg-119, and Arg-159. ATP is bound by residues Glu-332 and 358–361 (GGHL).

The protein belongs to the phosphoglycerate kinase family. In terms of assembly, homodimer.

The protein resides in the cytoplasm. The enzyme catalyses (2R)-3-phosphoglycerate + ATP = (2R)-3-phospho-glyceroyl phosphate + ADP. It participates in carbohydrate degradation; glycolysis; pyruvate from D-glyceraldehyde 3-phosphate: step 2/5. This chain is Phosphoglycerate kinase (pgk), found in Methanothermus fervidus (strain ATCC 43054 / DSM 2088 / JCM 10308 / V24 S).